The primary structure comprises 450 residues: Mitochondrial distribution and morphology protein 10 (450 aa).

Belongs to the MDM10 family. As to quaternary structure, component of the ER-mitochondria encounter structure (ERMES) or MDM complex, composed of MMM1, MDM10, MDM12 and MDM34. Associates with the mitochondrial outer membrane sorting assembly machinery SAM(core) complex.

The protein resides in the mitochondrion outer membrane. Functionally, component of the ERMES/MDM complex, which serves as a molecular tether to connect the endoplasmic reticulum and mitochondria. Components of this complex are involved in the control of mitochondrial shape and protein biogenesis and may function in phospholipid exchange. MDM10 is involved in the late assembly steps of the general translocase of the mitochondrial outer membrane (TOM complex). Functions in the TOM40-specific route of the assembly of outer membrane beta-barrel proteins, including the association of TOM40 with the receptor TOM22 and small TOM proteins. Can associate with the SAM(core) complex as well as the MDM12-MMM1 complex, both involved in late steps of the major beta-barrel assembly pathway, that is responsible for biogenesis of all outer membrane beta-barrel proteins. May act as a switch that shuttles between both complexes and channels precursor proteins into the TOM40-specific pathway. Plays a role in mitochondrial morphology and in the inheritance of mitochondria. The polypeptide is Mitochondrial distribution and morphology protein 10 (Paracoccidioides lutzii (strain ATCC MYA-826 / Pb01) (Paracoccidioides brasiliensis)).